The sequence spans 449 residues: Aminopeptidase C (449 aa).

Residues Cys70, His364, and Asn385 contribute to the active site.

The protein belongs to the peptidase C1 family. In terms of assembly, homohexamer.

Its subcellular location is the cytoplasm. It carries out the reaction Inactivates bleomycin B2 (a cytotoxic glycometallopeptide) by hydrolysis of a carboxyamide bond of beta-aminoalanine, but also shows general aminopeptidase activity. The specificity varies somewhat with source, but amino acid arylamides of Met, Leu and Ala are preferred.. This Lactobacillus delbrueckii subsp. lactis protein is Aminopeptidase C (pepC).